The chain runs to 182 residues: Caltractin ICL1b (182 aa).

The tract at residues 1 to 31 (MSRRGQQPPPQQQQAPPQKNQAGKFNPAEFV) is disordered. 4 consecutive EF-hand domains span residues 38–73 (EEVL…LGFE), 74–109 (AKNQ…RISE), 111–146 (DSKA…LGET), and 147–182 (MDDS…KTFA). Ca(2+)-binding residues include Asp51, Asp53, Thr55, Ser57, Glu62, Asp87, Asp89, Ser91, Gln93, and Glu98.

Belongs to the centrin family.

The protein resides in the cytoplasm. It localises to the cytoskeleton. Plays a fundamental role in microtubule organizing center structure and function. Component of the infraciliary lattice (ICL) and the ciliary basal bodies. In Paramecium tetraurelia, this protein is Caltractin ICL1b (Icl1b).